The sequence spans 348 residues: Phosphatidylglycerophosphate phosphatase 1, chloroplastic/mitochondrial (348 aa).

Residues 1 to 58 (MQTPSMAASTTSYYPIPKSFLLSPPRHKRNPNLISCSTKPICSPPPPSSSSSSPLQTT) constitute a chloroplast and mitochondrion transit peptide. The disordered stretch occupies residues 17 to 67 (PKSFLLSPPRHKRNPNLISCSTKPICSPPPPSSSSSSPLQTTTTHRSQKQN). A compositionally biased stretch (polar residues) spans 55 to 67 (LQTTTTHRSQKQN). The Phosphoryl acceptor signature appears at 184-188 (DKDNT).

The protein belongs to the HAD-like hydrolase superfamily. Requires Mg(2+) as cofactor. In terms of tissue distribution, mainly expressed in inflorescences (especially in pollen) and, to a lower extent, in leaves, stems and siliques, as well as, at low levels, in roots. Mostly expressed in hypocotyl, vasculatures, trichomes, guard cells and stigmas.

It is found in the plastid. It localises to the chloroplast. The protein localises to the mitochondrion. The enzyme catalyses a 1,2-diacyl-sn-glycero-3-phospho-(1'-sn-glycero-3'-phosphate) + H2O = a 1,2-diacyl-sn-glycero-3-phospho-(1'-sn-glycerol) + phosphate. The protein operates within phospholipid metabolism; phosphatidylglycerol biosynthesis; phosphatidylglycerol from CDP-diacylglycerol: step 2/2. Its function is as follows. Phosphatidylglycerophosphate (PGP) phosphatase involved in the biosynthesis of phosphatidylglycerol (PG), a phosphoglycerolipid predominantly present in chloroplastic thylakoid membranes and which has important photosynthetic function; seems to use PGP 34:3, PGP 34:2 and PGP 34:1 as substrates. Required for thylakoid membranes development and chloroplast function. Necessary for normal cell growth. Required for root growth and columella cells organization. This Arabidopsis thaliana (Mouse-ear cress) protein is Phosphatidylglycerophosphate phosphatase 1, chloroplastic/mitochondrial.